Here is a 525-residue protein sequence, read N- to C-terminus: Ent-kaurene oxidase (525 aa).

Residues 31–51 form a helical membrane-spanning segment; that stretch reads VHWLIYVAFGAWLCSYVIHVL. Residue Cys-466 participates in heme binding.

It belongs to the cytochrome P450 family. It depends on heme as a cofactor.

It is found in the membrane. The catalysed reaction is ent-kaur-16-ene + 3 reduced [NADPH--hemoprotein reductase] + 3 O2 = ent-kaur-16-en-19-oate + 3 oxidized [NADPH--hemoprotein reductase] + 4 H2O + 4 H(+). The protein operates within plant hormone biosynthesis; gibberellin biosynthesis. Functionally, catalyzes three successive oxidations of the 4-methyl group of ent-kaurene giving kaurenoic acid, a key step in gibberellin (GA) biosynthesis. The protein is Ent-kaurene oxidase (CYP503A1) of Fusarium fujikuroi (Bakanae and foot rot disease fungus).